We begin with the raw amino-acid sequence, 4687 residues long: Plectin (4687 aa).

The segment at 1–1473 is globular 1; that stretch reads MVAGMLMPLD…SELTTLTSQY (1473 aa). Arginine 21 carries the phosphoserine modification. Valine 26 bears the Phosphotyrosine mark. The tract at residues 111–158 is disordered; the sequence is RRRSPHVQTMQGPLGCPPKRGPLPAEDPAREERQVYRRKEREEGAPET. The span at 137–154 shows a compositional bias: basic and acidic residues; sequence DPAREERQVYRRKEREEG. The interval 181-406 is actin-binding; the sequence is DERDRVQKKT…YVSSLYDAMP (226 aa). Calponin-homology (CH) domains lie at 185 to 288 and 301 to 406; these read RVQK…LHFK and MTAK…DAMP. A Spectrin 1 repeat occupies 648–722; sequence LQSTQRRPEL…ERARNDESQL (75 aa). Residue serine 723 is modified to Phosphoserine. Spectrin repeat units lie at residues 743–827 and 840–933; these read KLLN…REDH and LQTQ…AIVQ. At threonine 818 the chain carries Phosphothreonine. Positions 944-1001 constitute an SH3 domain; sequence RGHVPLLAVCDYKQVEVTVHKGDQCQLVGPAQPFHWKVLSSSGSEAAVPSVCFLVPPP. Serine 1050 carries the phosphoserine modification. One copy of the Spectrin 4 repeat lies at 1318-1418; that stretch reads RERVTQLLER…QKFAKQYINA (101 aa). Position 1438 is a phosphoserine (serine 1438). 2 coiled-coil regions span residues 1472–1692 and 1724–2760; these read QYIK…ERWL and SFAE…TSQA. The segment at 1474–2758 is central fibrous rod domain; sequence IKFISETLRR…LAHSEEIATS (1285 aa). Residues 1623–1647 are disordered; sequence EEAEAQKRQAQEEAERLRRQVQDES. The residue at position 1724 (serine 1724) is a Phosphoserine. An N6-acetyllysine modification is found at lysine 1728. Disordered regions lie at residues 1741 to 1764, 1796 to 1846, 2096 to 2139, 2164 to 2188, and 2218 to 2307; these read VTVT…ERAR, SLAQ…GTAQ, EDTM…AEEE, LRER…KRLQ, and RLRS…DAEM. Basic and acidic residues-rich tracts occupy residues 1801–1839, 2096–2111, and 2119–2131; these read DAEK…KQRQ, EDTM…EAAR, and EEQR…ERVQ. Residues 2173 to 2182 show a composition bias toward low complexity; the sequence is ARQLQLAQEA. Residues 2218-2261 show a composition bias toward basic and acidic residues; it reads RLRSEAEAARRAAEEAEEAREQAEREAAQSRKQVEEAERLKQSA. Over residues 2262-2275 the composition is skewed to low complexity; sequence EEQAQAQAQAQAAA. The span at 2276–2291 shows a compositional bias: basic and acidic residues; that stretch reads EKLRKEAEQEAARRAQ. Phosphoserine is present on serine 2634. Lysine 2639 carries the post-translational modification N6-acetyllysine. The interval 2671-2710 is disordered; that stretch reads QEEQQRQQQQMEQEKQELVASMEEARRRQREAEEGVRRKQ. Over residues 2682–2710 the composition is skewed to basic and acidic residues; that stretch reads EQEKQELVASMEEARRRQREAEEGVRRKQ. The tract at residues 2759–4687 is globular 2; it reads QAAATKALPN…SLGGPESAVA (1929 aa). The residue at position 2777 (serine 2777) is a Phosphoserine. Position 2784 is a phosphotyrosine (tyrosine 2784). Plectin repeat units lie at residues 2791–2828, 2829–2866, 2867–2904, 2905–2942, 2943–2980, and 2984–3018; these read QKVP…REDV, RHYL…PGTA, LILL…PELH, HKLL…RDHG, IRLL…EEMN, and ADPS…PETG. The residue at position 2805 (serine 2805) is a Phosphoserine. Phosphothreonine is present on threonine 2889. At tyrosine 3036 the chain carries Phosphotyrosine. N6-acetyllysine occurs at positions 3056 and 3094. 6 Plectin repeats span residues 3119–3156, 3157–3194, 3195–3232, 3233–3270, 3271–3308, and 3311–3346; these read ALVP…ADEV, RQAL…PEVA, VALL…PEMH, EKLL…REQG, LRLL…KETN, and LTSP…QLTG. Tyrosine 3365 carries the phosphotyrosine modification. Position 3423 is an N6-acetyllysine (lysine 3423). Plectin repeat units follow at residues 3488-3525, 3526-3563, 3564-3601, 3602-3639, and 3643-3677; these read RTLL…ASTA, TLLL…PELH, EKLL…RDHA, IRLL…EEMN, and ADPS…PETG. Serine 3583 is subject to Phosphoserine. At threonine 3788 the chain carries Phosphothreonine. Tyrosine 3793 is modified (phosphotyrosine). Plectin repeat units lie at residues 3823 to 3860, 3861 to 3898, 3899 to 3936, 3937 to 3974, and 3978 to 4011; these read WRYL…AEVA, RLLL…PELH, DRLL…AEEA, LRLL…KDTH, and SEPS…DNSG. Threonine 4033 is subject to Phosphothreonine. Phosphoserine is present on serine 4057. 6 Plectin repeats span residues 4066-4103, 4104-4141, 4142-4179, 4180-4217, 4221-4255, and 4268-4308; these read QKFL…PGTA, FELL…PEFK, DKLL…KDHG, IRLL…EEMN, TDPS…PQTG, and RKTS…HQTY. The binding to intermediate filaments stretch occupies residues 4253-4303; that stretch reads QTGLCLLPLKEKKRERKTSSKSSVRKRRVVIVDPETGKEMSVYEAYRKGLI. Phosphoserine is present on residues serine 4385, serine 4387, serine 4388, serine 4389, serine 4392, serine 4393, serine 4394, and serine 4395. Tyrosine 4396 carries the post-translational modification Phosphotyrosine. Phosphoserine occurs at positions 4399 and 4409. Plectin repeat units follow at residues 4411–4448, 4449–4486, 4487–4524, 4525–4562, and 4563–4600; these read SDPT…NITG, QRLL…KIMV, DRIN…YEAG, QRFL…ARTA, and QKLR…EGTG. Threonine 4414 carries the post-translational modification Phosphothreonine. Threonine 4542 carries the phosphothreonine; by CDK1 modification. Residues serine 4610 and serine 4616 each carry the phosphoserine modification. A compositionally biased stretch (low complexity) spans 4614-4674; sequence YYSPYSVSGS…SGYGRRYASG (61 aa). Residues 4614 to 4687 are disordered; it reads YYSPYSVSGS…SLGGPESAVA (74 aa). At tyrosine 4618 the chain carries Phosphotyrosine. 3 positions are modified to phosphoserine: serine 4619, serine 4621, and serine 4625. Position 4626 is a phosphothreonine (threonine 4626). Positions 4628–4643 are 4 X 4 AA tandem repeats of G-S-R-X; it reads GSRTGSRTGSRAGSRR. Residue serine 4629 is modified to Phosphoserine. Residues arginine 4630 and arginine 4643 each carry the omega-N-methylarginine modification. Phosphoserine is present on residues serine 4645 and serine 4678.

This sequence belongs to the plakin or cytolinker family. In terms of assembly, homodimer or homotetramer. Interacts (via actin-binding domain) with SYNE3. Interacts (via calponin-homology (CH) 1 domain) with VIM (via rod region). Interacts (via N-terminus) with DST isoform 2 (via N-terminus). Interacts with FER. Interacts with TOR1A. Interacts with ANK3. Identified in complexes that contain VIM, EZR, AHNAK, BFSP1, BFSP2, ANK2, PLEC, PRX and spectrin. In terms of processing, phosphorylated by CDK1; regulates dissociation from intermediate filaments during mitosis. Isoform 2 is phosphorylated on Ser-21 and Tyr-26. In terms of tissue distribution, widely expressed with highest expression in skeletal muscle and lowest in thymus.

Its subcellular location is the cytoplasm. The protein localises to the cytoskeleton. It is found in the cell junction. It localises to the hemidesmosome. The protein resides in the cell projection. Its subcellular location is the podosome. Interlinks intermediate filaments with microtubules and microfilaments and anchors intermediate filaments to desmosomes or hemidesmosomes. May be involved not only in the cross-linking and stabilization of cytoskeletal intermediate filaments network, but also in the regulation of their dynamics. The chain is Plectin (Plec) from Rattus norvegicus (Rat).